We begin with the raw amino-acid sequence, 302 residues long: Protein NEOXANTHIN-DEFICIENT 1 (302 aa).

Required for neoxanthin biosynthesis. Probably not involved directly in the enzymatic conversion of violaxanthin to neoxanthin. Is necessary but not sufficient for neoxanthin synthesis. This is Protein NEOXANTHIN-DEFICIENT 1 from Oryza sativa subsp. japonica (Rice).